Here is a 315-residue protein sequence, read N- to C-terminus: GTPase Era (315 aa).

In terms of domain architecture, Era-type G spans 21–190 (RSGFVAIVGR…QSALEARLDP (170 aa)). The interval 29 to 36 (GRPNVGKS) is G1. 29–36 (GRPNVGKS) lines the GTP pocket. The G2 stretch occupies residues 55 to 59 (QTTRN). Residues 76 to 79 (DTPG) are G3. Residues 76 to 80 (DTPGI) and 138 to 141 (NKQD) each bind GTP. Residues 138–141 (NKQD) are G4. Residues 169–171 (FSA) form a G5 region. A KH type-2 domain is found at 221–297 (TRQEVPHSVA…YLKLFVKVEP (77 aa)).

This sequence belongs to the TRAFAC class TrmE-Era-EngA-EngB-Septin-like GTPase superfamily. Era GTPase family. In terms of assembly, monomer.

Its subcellular location is the cytoplasm. The protein resides in the cell inner membrane. Its function is as follows. An essential GTPase that binds both GDP and GTP, with rapid nucleotide exchange. Plays a role in 16S rRNA processing and 30S ribosomal subunit biogenesis and possibly also in cell cycle regulation and energy metabolism. This chain is GTPase Era, found in Synechocystis sp. (strain ATCC 27184 / PCC 6803 / Kazusa).